Consider the following 185-residue polypeptide: Regulator of rDNA transcription protein 13 (185 aa).

3 WD repeats span residues 9-48 (GHTDRIYSTIYDHERKRCISASMDTTIRIWDLENIRNNGE), 71-108 (GHRALVGLLGLSDKFLVSASVDGSIRCWDANTYFLKHF), and 111-148 (HTQLNTITALHVSDEVLVSGSEGLLNIYDLNSGLLVRS).

Functionally, may be involved in the modulation of rDNA transcription. The polypeptide is Regulator of rDNA transcription protein 13 (RRT13) (Saccharomyces cerevisiae (strain ATCC 204508 / S288c) (Baker's yeast)).